The following is a 755-amino-acid chain: Oligopeptide transporter 1 (755 aa).

Transmembrane regions (helical) follow at residues T58–F78, Q82–A102, I134–V154, A165–F185, F226–P246, F298–I318, Y370–I390, W434–F454, W462–I482, F546–W566, G614–W634, A664–F684, and I697–F717.

The protein belongs to the oligopeptide OPT transporter (TC 2.A.67.1) family. In terms of tissue distribution, highly expressed in flowers, and moderately expressed in leaves and stems.

The protein localises to the membrane. Its function is as follows. Involved in the translocation of tetra- and pentapeptides across the cellular membrane in an energy-dependent manner. The protein is Oligopeptide transporter 1 (OPT1) of Arabidopsis thaliana (Mouse-ear cress).